The sequence spans 456 residues: Equilibrative nucleoside transporter 2 (456 aa).

The helical transmembrane segment at Leu-13–Ile-33 threads the bilayer. The N-linked (GlcNAc...) asparagine glycan is linked to Asn-56. 5 consecutive transmembrane segments (helical) span residues Trp-69–Tyr-89, Ile-98–Val-118, Gly-123–Leu-143, Leu-161–Leu-181, and Leu-192–Leu-212. The disordered stretch occupies residues Gly-248–Gly-277. Phosphoserine is present on Ser-252. Over residues Asp-263–Lys-275 the composition is skewed to basic and acidic residues. 5 helical membrane-spanning segments follow: residues Ile-288–Ala-308, Trp-323–Gly-343, Leu-360–Val-380, Phe-396–Cys-416, and Ala-432–Phe-452.

The protein belongs to the SLC29A/ENT transporter (TC 2.A.57) family.

It is found in the apical cell membrane. The protein resides in the basolateral cell membrane. It localises to the nucleus membrane. It carries out the reaction inosine(in) = inosine(out). It catalyses the reaction adenosine(in) = adenosine(out). The catalysed reaction is uridine(out) = uridine(in). The enzyme catalyses thymidine(in) = thymidine(out). It carries out the reaction hypoxanthine(out) = hypoxanthine(in). It catalyses the reaction adenine(out) = adenine(in). The catalysed reaction is cytidine(in) = cytidine(out). The enzyme catalyses thymine(out) = thymine(in). It carries out the reaction uracil(in) = uracil(out). It catalyses the reaction guanine(out) = guanine(in). The catalysed reaction is guanosine(in) = guanosine(out). Bidirectional uniporter involved in the facilitative transport of nucleosides and nucleobases, and contributes to maintaining their cellular homeostasis. Functions as a Na(+)-independent, passive transporter. Involved in the transport of nucleosides such as inosine, adenosine, uridine, thymidine, cytidine and guanosine. Also able to transport purine nucleobases (hypoxanthine, adenine, guanine) and pyrimidine nucleobases (thymine, uracil). Involved in nucleoside transport at basolateral membrane of kidney cells, allowing liver absorption of nucleoside metabolites. Mediates apical nucleoside uptake into Sertoli cells, thereby regulating the transport of nucleosides in testis across the blood-testis-barrier. Mediates both the influx and efflux of hypoxanthine in skeletal muscle microvascular endothelial cells to control the amount of intracellular hypoxanthine available for xanthine oxidase-mediated ROS production. The chain is Equilibrative nucleoside transporter 2 from Mus musculus (Mouse).